A 320-amino-acid chain; its full sequence is Cytochrome f (320 aa).

The first 35 residues, 1–35, serve as a signal peptide directing secretion; the sequence is MQNRNTFSWVKEEMTRFISVSIMIYVITRTSISNA. Residues Tyr-36, Cys-56, Cys-59, and His-60 each contribute to the heme site. The chain crosses the membrane as a helical span at residues 286 to 306; that stretch reads VQGLLFFLASVILAQIFLVLK.

The protein belongs to the cytochrome f family. The 4 large subunits of the cytochrome b6-f complex are cytochrome b6, subunit IV (17 kDa polypeptide, petD), cytochrome f and the Rieske protein, while the 4 small subunits are PetG, PetL, PetM and PetN. The complex functions as a dimer. Requires heme as cofactor.

Its subcellular location is the plastid. The protein localises to the chloroplast thylakoid membrane. Component of the cytochrome b6-f complex, which mediates electron transfer between photosystem II (PSII) and photosystem I (PSI), cyclic electron flow around PSI, and state transitions. The chain is Cytochrome f from Calycanthus floridus var. glaucus (Eastern sweetshrub).